The sequence spans 129 residues: Small ribosomal subunit protein uS11 (129 aa).

Belongs to the universal ribosomal protein uS11 family. In terms of assembly, part of the 30S ribosomal subunit. Interacts with proteins S7 and S18. Binds to IF-3.

In terms of biological role, located on the platform of the 30S subunit, it bridges several disparate RNA helices of the 16S rRNA. Forms part of the Shine-Dalgarno cleft in the 70S ribosome. The chain is Small ribosomal subunit protein uS11 from Marinobacter nauticus (strain ATCC 700491 / DSM 11845 / VT8) (Marinobacter aquaeolei).